Reading from the N-terminus, the 46-residue chain is Diuretic hormone (46 aa).

Isoleucine amide is present on isoleucine 46.

Belongs to the sauvagine/corticotropin-releasing factor/urotensin I family.

The protein resides in the secreted. In terms of biological role, regulation of fluid secretion. Stimulates primary urine secretion by Malpighian tubules and causes a dose-dependent stimulation of cAMP levels in the tubules. The protein is Diuretic hormone of Locusta migratoria (Migratory locust).